The primary structure comprises 158 residues: Non-secretory ribonuclease (158 aa).

Positions 1-27 (MVPKLFTSQICLLLLLGLLGVEGSLHA) are cleaved as a signal peptide. His42 functions as the Proton acceptor in the catalytic mechanism. Disulfide bonds link Cys50-Cys110, Cys64-Cys121, Cys82-Cys136, and Cys89-Cys98. A 3'-nitrotyrosine modification is found at Tyr60. 65 to 69 (KNQNT) is a binding site for substrate. N-linked (GlcNAc...) asparagine glycans are attached at residues Asn86, Asn92, and Asn111. His153 (proton donor) is an active-site residue.

Belongs to the pancreatic ribonuclease family. As to quaternary structure, interacts with and forms a tight 1:1 complex with RNH1. Dimerization of two such complexes may occur.

Its subcellular location is the lysosome. The protein localises to the cytoplasmic granule. The catalysed reaction is an [RNA] containing cytidine + H2O = an [RNA]-3'-cytidine-3'-phosphate + a 5'-hydroxy-ribonucleotide-3'-[RNA].. It carries out the reaction an [RNA] containing uridine + H2O = an [RNA]-3'-uridine-3'-phosphate + a 5'-hydroxy-ribonucleotide-3'-[RNA].. This is a non-secretory ribonuclease. It is a pyrimidine specific nuclease with a slight preference for U. Cytotoxin and helminthotoxin. Possesses a wide variety of biological activities. The chain is Non-secretory ribonuclease (RNASE2) from Aotus trivirgatus (Three-striped night monkey).